We begin with the raw amino-acid sequence, 142 residues long: Transcriptional regulator MraZ (142 aa).

SpoVT-AbrB domains follow at residues Arg5–Ser47 and Ala76–Asn119.

Belongs to the MraZ family. In terms of assembly, forms oligomers.

The protein resides in the cytoplasm. Its subcellular location is the nucleoid. This chain is Transcriptional regulator MraZ, found in Thermomicrobium roseum (strain ATCC 27502 / DSM 5159 / P-2).